The chain runs to 379 residues: Putative zinc metalloprotease sll0528 (379 aa).

The next 2 helical transmembrane spans lie at 20–40 (LFGI…LVTL) and 54–74 (GGTP…SVVA). Histidine 75 lines the Zn(2+) pocket. The active site involves glutamate 76. Histidine 79 is a binding site for Zn(2+). The next 3 membrane-spanning stretches (helical) occupy residues 115 to 135 (FAVA…LTIV), 148 to 168 (IIGL…IPGL), and 212 to 232 (GILN…WFLL). CBS domains lie at 257–315 (VIPN…DWPQ) and 322–379 (MQYP…TSAA).

Belongs to the peptidase M50B family. It depends on Zn(2+) as a cofactor.

It localises to the cell membrane. The chain is Putative zinc metalloprotease sll0528 from Synechocystis sp. (strain ATCC 27184 / PCC 6803 / Kazusa).